A 282-amino-acid polypeptide reads, in one-letter code: Stress response regulator protein 1 (282 aa).

2 stretches are compositionally biased toward low complexity: residues 12-30 and 41-58; these read NLSRSSSPAAPPTTNHSST and SLDTNSQSDSNSTQSNNN. Disordered stretches follow at residues 12 to 31, 41 to 84, and 112 to 139; these read NLSRSSSPAAPPTTNHSSTV, SLDT…DDED, and LTPFDGQTTSPQDSIISSKSSNKSTTVV. The segment covering 66–77 has biased composition (polar residues); that stretch reads SDYNSYTHNQYY. Over residues 125–139 the composition is skewed to low complexity; the sequence is SIISSKSSNKSTTVV. Residues 155–273 enclose the Response regulatory domain; the sequence is SFLIVDDNII…LDFMANSIDD (119 aa). Aspartate 206 bears the 4-aspartylphosphate mark.

In terms of biological role, required for stress adaptation, morphogenesis and virulence. The sequence is that of Stress response regulator protein 1 (SRR1) from Candida albicans (strain WO-1) (Yeast).